A 96-amino-acid polypeptide reads, in one-letter code: Aspartyl/glutamyl-tRNA(Asn/Gln) amidotransferase subunit C (96 aa).

Belongs to the GatC family. In terms of assembly, heterotrimer of A, B and C subunits.

It catalyses the reaction L-glutamyl-tRNA(Gln) + L-glutamine + ATP + H2O = L-glutaminyl-tRNA(Gln) + L-glutamate + ADP + phosphate + H(+). The catalysed reaction is L-aspartyl-tRNA(Asn) + L-glutamine + ATP + H2O = L-asparaginyl-tRNA(Asn) + L-glutamate + ADP + phosphate + 2 H(+). Functionally, allows the formation of correctly charged Asn-tRNA(Asn) or Gln-tRNA(Gln) through the transamidation of misacylated Asp-tRNA(Asn) or Glu-tRNA(Gln) in organisms which lack either or both of asparaginyl-tRNA or glutaminyl-tRNA synthetases. The reaction takes place in the presence of glutamine and ATP through an activated phospho-Asp-tRNA(Asn) or phospho-Glu-tRNA(Gln). This chain is Aspartyl/glutamyl-tRNA(Asn/Gln) amidotransferase subunit C, found in Oceanobacillus iheyensis (strain DSM 14371 / CIP 107618 / JCM 11309 / KCTC 3954 / HTE831).